Here is a 599-residue protein sequence, read N- to C-terminus: Transcription factor COE4 (599 aa).

The tract at residues 64–67 is interaction with DNA; sequence RKSN. The C5-type zinc-finger motif lies at 152–171; the sequence is CRVLLTHEIMCSRCCDRKSC. Interaction with DNA stretches follow at residues 198–205 and 237–240; these read NCLKNAGN and NNSK. The IPT/TIG domain occupies 256–339; the sequence is PCIKAISPGE…KGAPGRFVYT (84 aa). Disordered regions lie at residues 449–473 and 556–586; these read GYARSCGSASPRFAPSPGSQQSSYG and VLRPPSSPSQACPRAHREGLPDQPFEDTDKF. Residues 464–473 show a composition bias toward low complexity; that stretch reads SPGSQQSSYG.

It belongs to the COE family. As to quaternary structure, forms either a homodimer or a heterodimer with a related family member. As to expression, expressed in the olfactory epithelium, including in both neuronal and basal cell layers. Absent in the vomeronasal organ. Absent from NK cells and CD8(+) T cells.

Its subcellular location is the nucleus. In terms of biological role, transcription factor. Positively modulates transcription, perhaps less strongly than other early B cell factor/EBF family proteins. Binds an EBF1/Olf-1 consensus site in vitro. The sequence is that of Transcription factor COE4 (Ebf4) from Mus musculus (Mouse).